The chain runs to 231 residues: Ribosyldihydronicotinamide dehydrogenase [quinone] (231 aa).

FAD-binding positions include His12, 18–21, and 104–107; these read FNGS and LYWF. Position 127–129 (127–129) interacts with substrate; the sequence is FDI. Residues 148 to 151 and Tyr156 contribute to the FAD site; that span reads TTGG. Residues His174 and His178 each contribute to the Zn(2+) site. Residue Asp194 coordinates FAD. Ser197 carries the phosphoserine modification. Arg201 lines the FAD pocket. Position 223 (Cys223) interacts with Zn(2+).

Belongs to the NAD(P)H dehydrogenase (quinone) family. As to quaternary structure, homodimer. Zn(2+) is required as a cofactor. FAD serves as cofactor.

It is found in the cytoplasm. It catalyses the reaction 1-(beta-D-ribofuranosyl)-1,4-dihydronicotinamide + a quinone + H(+) = beta-nicotinamide D-riboside + a quinol. In terms of biological role, the enzyme apparently serves as a quinone reductase in connection with conjugation reactions of hydroquinones involved in detoxification pathways as well as in biosynthetic processes such as the vitamin K-dependent gamma-carboxylation of glutamate residues in prothrombin synthesis. The sequence is that of Ribosyldihydronicotinamide dehydrogenase [quinone] (Nqo2) from Mus musculus (Mouse).